Consider the following 528-residue polypeptide: Negative elongation factor A (528 aa).

Residues 89 to 248 (WVLMVADILK…TPIPPSRTLL (160 aa)) form the HDAg domain. An NELF-C/D-binding region spans residues 125-188 (REKVGECEAS…LQKSTETAQQ (64 aa)). Residue threonine 157 is modified to Phosphothreonine. Residues 189 to 248 (LKRSAGVPFHAKGRGLLRKMDTTTPLKGIPKQAPFRSPTAPSVFSPTGNRTPIPPSRTLL) are RNAPII-binding. The segment at 215 to 245 (KGIPKQAPFRSPTAPSVFSPTGNRTPIPPSR) is disordered. Serine 225 and serine 233 each carry phosphoserine. The span at 227–238 (TAPSVFSPTGNR) shows a compositional bias: polar residues. Phosphothreonine is present on threonine 277. The span at 320-341 (PSTSYLPSTPSVVPASSYIPSS) shows a compositional bias: low complexity. The disordered stretch occupies residues 320-409 (PSTSYLPSTP…PPAVAPTTQT (90 aa)). Serine 363 carries the post-translational modification Phosphoserine.

Belongs to the NELF-A family. In terms of assembly, the NELF complex is composed of NELFA, NELFB, NELFCD (isoform NELF-C or isoform NELF-D) and NELFE; NELFA and NELFCD form a stable subcomplex that binds to the N-terminus of NELFB. In vitro, the NELFA:NELFCD subcomplex binds to ssDNA and ssRNA in a sequence- and structure-dependent manner. Interacts with the RNA polymerase II complex when it is not phosphorylated by P-TEFb. In terms of tissue distribution, ubiquitous. Expressed in heart, brain, placenta, liver, skeletal muscle, kidney and pancreas. Expressed at lower level in adult lung. Expressed in fetal brain, lung, liver and kidney.

Its subcellular location is the nucleus. Its function is as follows. Essential component of the NELF complex, a complex that negatively regulates the elongation of transcription by RNA polymerase II. The NELF complex, which acts via an association with the DSIF complex and causes transcriptional pausing, is counteracted by the P-TEFb kinase complex. Functionally, (Microbial infection) The NELF complex is involved in HIV-1 latency possibly involving recruitment of PCF11 to paused RNA polymerase II. This Homo sapiens (Human) protein is Negative elongation factor A (NELFA).